The sequence spans 305 residues: MRIVFMGTPSFAEVILRALVENEDKKIEVVGLFTQRDKPFGRKKELKAPETKTYILENHLNIPIFQPQSLKEPEVQILKGLKPDFIVVVAYGKILPKEVLTIAPCINLHASLLPKYRGASPIHEMILNDDRIYGISTMLMDLELDSGDILESASFLREDYLDLDALSLKLARMGATLLLSTLKNFHSITRKPQDHMQASFCKKIAKADGLVGFKDAKNLFLKSLAFKSWPEIFLENSLKLLEVELVENEKSHKEGEILAIDERGVLVGCLKGSVRIARLQAVGKKPLKAKDYLNGRRLKVGGILT.

111–114 (SLLP) contacts (6S)-5,6,7,8-tetrahydrofolate.

It belongs to the Fmt family.

The catalysed reaction is L-methionyl-tRNA(fMet) + (6R)-10-formyltetrahydrofolate = N-formyl-L-methionyl-tRNA(fMet) + (6S)-5,6,7,8-tetrahydrofolate + H(+). Its function is as follows. Attaches a formyl group to the free amino group of methionyl-tRNA(fMet). The formyl group appears to play a dual role in the initiator identity of N-formylmethionyl-tRNA by promoting its recognition by IF2 and preventing the misappropriation of this tRNA by the elongation apparatus. This Helicobacter pylori (strain J99 / ATCC 700824) (Campylobacter pylori J99) protein is Methionyl-tRNA formyltransferase.